The sequence spans 867 residues: Putative tyrosine-protein kinase F09A5.2 (867 aa).

2 consecutive transmembrane segments (helical) span residues 45-65 and 355-375; these read VMKI…FATS and LLLI…AFFV. N-linked (GlcNAc...) asparagine glycans are attached at residues Asn-395 and Asn-423. Residues 467 to 757 enclose the Protein kinase domain; the sequence is VQEDHLLGNG…FNEMRGEITV (291 aa). 473–481 contacts ATP; sequence LGNGAFANV. N-linked (GlcNAc...) asparagine glycosylation is found at Asn-496 and Asn-500. Position 516 (Lys-516) interacts with ATP. An N-linked (GlcNAc...) asparagine glycan is attached at Asn-585. Catalysis depends on Asp-626, which acts as the Proton acceptor. 2 disordered regions span residues 782 to 821 and 848 to 867; these read LTMQ…GTCA and SKSM…TYQS. Over residues 801 to 810 the composition is skewed to acidic residues; that stretch reads DMDEDGDYDS. The span at 858 to 867 shows a compositional bias: polar residues; that stretch reads SNSTVSTYQS. N-linked (GlcNAc...) asparagine glycosylation occurs at Asn-859.

This sequence belongs to the protein kinase superfamily. Tyr protein kinase family.

The protein resides in the membrane. The catalysed reaction is L-tyrosyl-[protein] + ATP = O-phospho-L-tyrosyl-[protein] + ADP + H(+). The chain is Putative tyrosine-protein kinase F09A5.2 from Caenorhabditis elegans.